Consider the following 838-residue polypeptide: Transforming acidic coiled-coil-containing protein 3 (838 aa).

An N-acetylserine modification is found at Ser2. 3 positions are modified to phosphoserine: Ser25, Ser39, and Ser71. Residues 123 to 227 are disordered; sequence EADTDLLGDA…HGAEEECKAE (105 aa). Residues 132–164 are compositionally biased toward low complexity; the sequence is ASPAFGSGSSSESGPGALADLDCSSSSQSPGSS. Phosphoserine occurs at positions 175 and 177. The segment covering 204-227 has biased composition (basic and acidic residues); sequence DPCRTESQHKAETPHGAEEECKAE. Phosphoserine is present on residues Ser250, Ser317, and Ser402. The interval 311-527 is disordered; that stretch reads GRAMTLSPQE…LELKEESFRD (217 aa). Over residues 403-412 the composition is skewed to basic and acidic residues; it reads YHLDWDKMDD. At Ser434 the chain carries Phosphoserine. Positions 492–503 are enriched in polar residues; sequence NSASTSLPTSCP. A necessary but not sufficient for spindle localization region spans residues 522-577; it reads EESFRDPAEVLGTGAEVDYLEQFGTSSFKESALRKQSLYLKFDPLLRDSPGRPVPV. Ser558 is modified (phosphoserine; by AURKA). Residues 569–594 are disordered; sequence DSPGRPVPVATETSSMHGANETPSGR. A compositionally biased stretch (polar residues) spans 579–591; sequence TETSSMHGANETP. The interval 594-838 is necessary but not sufficient for spindle localization; that stretch reads RPREAKLVEF…DDLISKMEKI (245 aa). Positions 637 to 837 form a coiled coil; the sequence is LQYSQKDLDA…CDDLISKMEK (201 aa).

Belongs to the TACC family. In terms of assembly, interacts with microtubules. Interacts with CKAP5 independently of clathrin. Interacts with CKAP5 and clathrin forming the TACC3/ch-TOG/clathrin complex located at spindle inter-microtubules bridges; TACC3 (phosphorylated at Ser-558 by AURKA) and CLTC are proposed to form a composite microtubule interaction surface. Interacts with CCDC100/CEP120. The coiled coil C-terminal region interacts with AH receptor nuclear translocator protein (ARNT) and ARNT2. Interacts with GCN5L2 and PCAF.

It is found in the cytoplasm. The protein resides in the cytoskeleton. Its subcellular location is the microtubule organizing center. It localises to the centrosome. The protein localises to the spindle. It is found in the spindle pole. Functionally, plays a role in the microtubule-dependent coupling of the nucleus and the centrosome. Involved in the processes that regulate centrosome-mediated interkinetic nuclear migration (INM) of neural progenitors. Acts as a component of the TACC3/ch-TOG/clathrin complex proposed to contribute to stabilization of kinetochore fibers of the mitotic spindle by acting as inter-microtubule bridge. The TACC3/ch-TOG/clathrin complex is required for the maintenance of kinetochore fiber tension. May be involved in the control of cell growth and differentiation. May contribute to cancer. This Homo sapiens (Human) protein is Transforming acidic coiled-coil-containing protein 3 (TACC3).